Reading from the N-terminus, the 865-residue chain is Leucine--tRNA ligase (865 aa).

The 'HIGH' region signature appears at 58 to 68 (PYPSGNLHMGH). The short motif at 629 to 633 (KMSKS) is the 'KMSKS' region element. An ATP-binding site is contributed by lysine 632.

Belongs to the class-I aminoacyl-tRNA synthetase family.

It is found in the cytoplasm. The enzyme catalyses tRNA(Leu) + L-leucine + ATP = L-leucyl-tRNA(Leu) + AMP + diphosphate. The polypeptide is Leucine--tRNA ligase (Synechococcus elongatus (strain ATCC 33912 / PCC 7942 / FACHB-805) (Anacystis nidulans R2)).